Here is a 309-residue protein sequence, read N- to C-terminus: Prephenate dehydratase (309 aa).

The region spanning 3–191 (GIAYLGPEGT…ARTRFVLVGC (189 aa)) is the Prephenate dehydratase domain. Positions 205-282 (SVVLRLDNVP…ADVRYLGSWP (78 aa)) constitute an ACT domain.

In terms of assembly, homodimer.

The catalysed reaction is prephenate + H(+) = 3-phenylpyruvate + CO2 + H2O. It participates in amino-acid biosynthesis; L-phenylalanine biosynthesis; phenylpyruvate from prephenate: step 1/1. The polypeptide is Prephenate dehydratase (pheA) (Mycolicibacterium gilvum (strain PYR-GCK) (Mycobacterium gilvum (strain PYR-GCK))).